Consider the following 361-residue polypeptide: Septin-1 (361 aa).

Residues 32–304 (KGFEFTLMVV…ENYRSDRLAK (273 aa)) form the Septin-type G domain. The tract at residues 42–49 (GESGLGKS) is G1 motif. GTP contacts are provided by residues 42–49 (GESGLGKS), Thr-76, Gly-102, 181–189 (KADCLTKKE), Gly-239, and Arg-254. The segment at 99–102 (DTPG) is G3 motif. A G4 motif region spans residues 180-183 (AKAD). Position 319 is a phosphoserine (Ser-319).

This sequence belongs to the TRAFAC class TrmE-Era-EngA-EngB-Septin-like GTPase superfamily. Septin GTPase family. Likely part of a multicomponent septin complex that includes pnut. Interacts with pnut. Interacts with park. In terms of processing, ubiquitinated by park, leading to its degradation by the proteasome. Accumulates at the leading edge of the cleavage furrow in dividing cells and cellularizing embryos (at protein level). Also accumulates at the leading edge of the embryo epithelium during dorsal closure, in the embryonic neurons, and at the baso-lateral surfaces of ovarian follicle cells (at protein level).

Its subcellular location is the cytoplasm. In terms of biological role, involved in cytokinesis. May be involved in p53-dependent apoptosis. The chain is Septin-1 from Drosophila melanogaster (Fruit fly).